The chain runs to 997 residues: Synaptonemal complex protein 1 (997 aa).

The Mediates head to head self-assembly of N-terminal ends signature appears at 102–112 (PMSRLYSKLYK). The short motif at 118-121 (KKWK) is the Nuclear localization signal element. Coiled coils occupy residues 121-176 (KVSI…LIKE) and 212-696 (YVDL…KKIS). The interval 207-363 (ETRQVYVDLN…YQLTEEKEAQ (157 aa)) is interaction with SYCE3. Positions 698 to 792 (EKLLGEVEKA…VSLKKQLEVE (95 aa)) are required for pH-induced assembly of C-terminal ends into antiparallel tetramers. Residues 701-704 (LGEV) carry the Nuclear localization signal motif. Positions 768–806 (KVALETELSNIRNELVSLKKQLEVEKEEKEKLKMEQENT) form a coiled coil. The DNA-binding stretch occupies residues 805–997 (NTAILTDKKD…RLKEAEKLFT (193 aa)). Phosphoserine is present on S824. The disordered stretch occupies residues 828 to 863 (TSWKFDSKTTPSQNISRLSSSMDSGKSKDNRDSLRA). The span at 835-851 (KTTPSQNISRLSSSMDS) shows a compositional bias: polar residues. Basic and acidic residues predominate over residues 852–861 (GKSKDNRDSL). A Nuclear localization signal motif is present at residues 902 to 905 (KKRK). Phosphothreonine is present on T940.

Structural component of synaptonemal complexes. Homotetramer that consists of an N-terminal four-helical bundle that bifurcates into two elongated C-terminal dimeric coiled coils. This tetrameric building block potentially self-assembles into a supramolecular zipper-like lattice to mediate meiotic chromosome synapsis. Self-assembly is likely initiated by local proton density at chromosome axis, which is predicted to trigger antiparallel back to back assembly of adjacent C-terminal ends into tetrameric structures that anchor to chromosomal DNA. Then the N-terminal ends are predicted to undergo cooperative antiparallel head to head assembly at the midline of synaptonemal complexes central element to form a zipper-like lattice between properly aligned homologous chromosomes. The nascent synapsis generated by SYCP1 is stabilized through interaction with central element proteins SYCE1 and SYCE2. Interacts (via tetrameric core) with SYCE3; the interaction remodels SYCP1 homotetramers to 2:1 heterotrimers with SYCE3. SYCP1/SYCE3 heterotrimers form lattice assemblies as part of the mature synaptonemal complex via both lateral and head-to-head interactions. Forms a complex with EWSR1, PRDM9, SYCP3 and REC8; complex formation is dependent of phosphorylated form of REC8 and requires PRDM9 bound to hotspot DNA; EWSR1 joins PRDM9 with the chromosomal axis through REC8. Interacts with SPO16. As to expression, testis.

Its subcellular location is the nucleus. The protein localises to the chromosome. It is found in the centromere. Its function is as follows. Major component of the transverse filaments of synaptonemal complexes, formed between homologous chromosomes during meiotic prophase. Required for normal assembly of the central element of the synaptonemal complexes. Required for normal centromere pairing during meiosis. Required for normal meiotic chromosome synapsis during oocyte and spermatocyte development and for normal male and female fertility. The chain is Synaptonemal complex protein 1 from Rattus norvegicus (Rat).